The primary structure comprises 317 residues: Glucokinase (317 aa).

6-12 (GVDIGGT) provides a ligand contact to ATP.

Belongs to the ROK (NagC/XylR) family. Homooligomer (possibly a homotetramer). Alternatively, it may form a heterotetramer of two glucokinase subunits with two ORF2 (AC P40182) proteins.

The protein resides in the cytoplasm. It catalyses the reaction D-glucose + ATP = D-glucose 6-phosphate + ADP + H(+). A probable glucose kinase. Required for glucose repression of many different genes, restores glucose kinase activity in E.coli glk mutants. The sequence is that of Glucokinase (glkA) from Streptomyces coelicolor (strain ATCC BAA-471 / A3(2) / M145).